Here is a 102-residue protein sequence, read N- to C-terminus: Secretoglobin family 1D member (102 aa).

The N-terminal stretch at 1–21 (MRLSVTALLVTLALCYYEANA) is a signal peptide. The N-linked (GlcNAc...) asparagine glycan is linked to Asn87.

Belongs to the secretoglobin family. Lipophilin subfamily.

It localises to the secreted. In terms of biological role, may bind androgens and other steroids. May be under transcriptional regulation of steroid hormones. In Bos taurus (Bovine), this protein is Secretoglobin family 1D member (SCGB1D).